The sequence spans 141 residues: Albumin-8 (141 aa).

The N-terminal stretch at 1 to 25 (MARFSIVFAAAGVLLLVAMAPVSEA) is a signal peptide. Residues 26–38 (STTTIITTIIEEN) constitute a propeptide that is removed on maturation. Intrachain disulfides connect C49–C100, C62–C89, C90–C132, and C102–C139.

Belongs to the 2S seed storage albumins family. As to quaternary structure, heterodimer; disulfide-linked.

Functionally, this is a 2S seed storage protein. The sequence is that of Albumin-8 from Helianthus annuus (Common sunflower).